The chain runs to 282 residues: ATP synthase subunit a (282 aa).

The next 5 membrane-spanning stretches (helical) occupy residues 45-65, 106-126, 160-179, 232-252, and 253-273; these read AIHV…LWLF, IAPL…MDLI, INAT…FYSI, LIFI…SVPW, and AIFH…LTIV.

It belongs to the ATPase A chain family. As to quaternary structure, F-type ATPases have 2 components, CF(1) - the catalytic core - and CF(0) - the membrane proton channel. CF(1) has five subunits: alpha(3), beta(3), gamma(1), delta(1), epsilon(1). CF(0) has three main subunits: a(1), b(2) and c(9-12). The alpha and beta chains form an alternating ring which encloses part of the gamma chain. CF(1) is attached to CF(0) by a central stalk formed by the gamma and epsilon chains, while a peripheral stalk is formed by the delta and b chains.

The protein localises to the cell inner membrane. Its function is as follows. Key component of the proton channel; it plays a direct role in the translocation of protons across the membrane. In Marinomonas sp. (strain MWYL1), this protein is ATP synthase subunit a.